The following is a 519-amino-acid chain: Putative glucosylceramidase 4 (519 aa).

A signal peptide spans 1–24 (MILNISVSLLIFLAFYGFSSDAKS). The active-site Proton donor is the Glu-256. The active-site Nucleophile is the Glu-361.

This sequence belongs to the glycosyl hydrolase 30 family.

The enzyme catalyses a beta-D-glucosylceramide + H2O = an N-acyl-sphingoid base + D-glucose. The catalysed reaction is a beta-D-glucosyl-(1&lt;-&gt;1')-N-acylsphing-4-enine + H2O = an N-acylsphing-4-enine + D-glucose. It carries out the reaction an N-acyl-1-beta-D-glucosyl-15-methylhexadecasphing-4-enine + H2O = an N-acyl-15-methylhexadecasphing-4-enine + D-glucose. It participates in lipid metabolism; sphingolipid metabolism. Glucosylceramidase that catalyzes the hydrolysis of glucosylceramides into free ceramides and glucose. C.elegans contains specific sphingoid bases, which are unique or different in structure compared to the sphingoid bases found in other animals. Two examples of these distinctive compounds are: 15-methylhexadecasphinganine and 15-methylhexadecasphing-4-enine. In Caenorhabditis elegans, this protein is Putative glucosylceramidase 4 (gba-4).